Consider the following 85-residue polypeptide: Large ribosomal subunit protein bL27 (85 aa).

The segment at 1–22 (MAHKKAAGSTRNGRDSESKRLG) is disordered.

The protein belongs to the bacterial ribosomal protein bL27 family.

This chain is Large ribosomal subunit protein bL27, found in Pseudoalteromonas translucida (strain TAC 125).